The sequence spans 3674 residues: Dystrophin (3674 aa).

The actin-binding stretch occupies residues 1–236 (MSEVSSDERE…YVTSLFQVLP (236 aa)). Calponin-homology (CH) domains are found at residues 11-115 (DVQK…LHWQ) and 130-236 (TNSE…QVLP). Residues 59–68 (PKEKGSTRVH) are ANK2- and ANK-3 binding. Positions 306–318 (SDPTRSPFPSQRL) are enriched in polar residues. Residues 306–325 (SDPTRSPFPSQRLESPEDKS) are disordered. Spectrin repeat units lie at residues 335–443 (VNLD…NLHK), 444–552 (VLMD…LLQD), 555–663 (LKWQ…QISQ), 715–824 (EIRK…WLEY), 826–930 (NRII…ELQI), 939–1041 (RYQE…KLEE), 1044–1150 (AKLR…ALKG), 1153–1259 (DKTI…TLEE), 1262–1363 (ACWH…LLEQ), 1364–1459 (SIQS…LFQK), 1464–1564 (EQRL…QLEK), 1567–1672 (KLSR…LLLE), 1675–1774 (KHME…KASI), 1775–1870 (PLKE…KALE), 1873–1975 (HQWY…TVHE), 1988–2097 (EISY…KFDR), 2100–2204 (EKWR…RLEE), 2207–2314 (NILS…EIEA), 2315–2412 (HIKD…LRAK), 2464–2566 (FNRA…QLNE), 2569–2675 (KDST…VLEE), 2678–2791 (RLLQ…HLEA), 2797–2919 (KRLH…RKID), and 2924–3029 (RLQE…QLHE). The interaction with SYNM stretch occupies residues 1411–1909 (SDLTSHEISL…PEPQDEKKIK (499 aa)). A WW domain is found at 3044 to 3077 (TSVQGPWERAISPNKVPYYINHETQTTCWDHPKM). The interval 3047–3397 (QGPWERAISP…TVLEGDNMET (351 aa)) is interaction with SYNM. Residues 3297–3353 (KHQAKCNICKECPIIGFRYRSLKHFNYDICQSCFFSGRVAKGHKMHYPMVEYCTPTT) form a ZZ-type; degenerate zinc finger. Zn(2+)-binding residues include Cys3302, Cys3305, Cys3326, and Cys3329. The tract at residues 3455-3507 (DDEHLLIQHYCQSLNQDSPLSQPRSPAQILISLESEERGELERILADLEEENR) is binds to SNTB1. A phosphoserine mark is found at Ser3472, Ser3479, and Ser3489. 2 disordered regions span residues 3517–3543 (KQQH…QSPR) and 3590–3674 (QAEA…EDTM). 2 stretches are compositionally biased toward polar residues: residues 3596–3615 (NGTT…SSQP) and 3651–3662 (QLNNSFPSSRGR). Ser3601, Ser3602, Ser3606, Ser3612, Ser3613, and Ser3655 each carry phosphoserine.

In terms of assembly, interacts with SYNM. Interacts with the syntrophins SNTG1 and SNTG2. Interacts with KRT19. Component of the dystrophin-associated glycoprotein complex which is composed of three subcomplexes: a cytoplasmic complex comprised of DMD (or UTRN), DTNA and a number of syntrophins, such as SNTB1, SNTB2, SNTG1 and SNTG2, the transmembrane dystroglycan complex, and the sarcoglycan-sarcospan complex. Interacts with DAG1 (betaDAG1) with DMD; the interaction is inhibited by phosphorylation on the PPXY motif of DAG1. Interacts with SYNM; SNTA1 and SNTB1. Interacts with CMYA5. Directly interacts with ANK2 and ANK3; these interactions do not interfere with betaDAG1-binding and are necessary for proper localization in muscle cells. Identified in a dystroglycan complex that contains at least PRX, DRP2, UTRN, DMD and DAG1. Interacts with DTNB. Interacts with PGM5; the interaction is direct. Interacts with NOS1; localizes NOS1 to sarcolemma in muscle cells. As to expression, in the retina, expressed in the outer plexiform layer (OPL) and around the blood vessels. Also observed at the vitreal border of the retina corresponding to the inner limiting membrane (ILM). Presynaptically localized in cone pedicles and postsynaptically in bipolar cells (at protein level).

The protein localises to the cell membrane. It localises to the sarcolemma. Its subcellular location is the cytoplasm. It is found in the cytoskeleton. The protein resides in the postsynaptic cell membrane. Its function is as follows. Anchors the extracellular matrix to the cytoskeleton via F-actin. Ligand for dystroglycan. Component of the dystrophin-associated glycoprotein complex which accumulates at the neuromuscular junction (NMJ) and at a variety of synapses in the peripheral and central nervous systems and has a structural function in stabilizing the sarcolemma. Also implicated in signaling events and synaptic transmission. The polypeptide is Dystrophin (Sus scrofa (Pig)).